A 377-amino-acid chain; its full sequence is Flap endonuclease 1 (377 aa).

The segment at 1-105 (MGIKGLSQVI…GELAKRASRQ (105 aa)) is N-domain. Position 34 (Asp34) interacts with Mg(2+). DNA is bound by residues Arg47 and Arg71. Asp87 is a binding site for Mg(2+). A disordered region spans residues 96 to 115 (GELAKRASRQQKAREEREEA). An I-domain region spans residues 123–254 (MVDKFAKRTV…ARAVELIRQH (132 aa)). Mg(2+) is bound by residues Glu159, Glu161, Asp180, and Asp182. Glu159 is a DNA binding site. Residues Gly232 and Asp234 each contribute to the DNA site. Asp234 serves as a coordination point for Mg(2+). The tract at residues 337 to 345 (PQGRLDSFF) is interaction with PCNA. Residues 350–377 (STKKEKEKPKAAAKRKRDTKSSAPKKKR) are disordered. Positions 360 to 377 (AAAKRKRDTKSSAPKKKR) are enriched in basic residues.

The protein belongs to the XPG/RAD2 endonuclease family. FEN1 subfamily. Interacts with PCNA. Three molecules of rad2 bind to one PCNA trimer with each molecule binding to one PCNA monomer. PCNA stimulates the nuclease activity without altering cleavage specificity. Mg(2+) serves as cofactor. Post-translationally, phosphorylated. Phosphorylation upon DNA damage induces relocalization to the nuclear plasma.

It is found in the nucleus. Its subcellular location is the nucleolus. The protein localises to the nucleoplasm. It localises to the mitochondrion. In terms of biological role, structure-specific nuclease with 5'-flap endonuclease and 5'-3' exonuclease activities involved in DNA replication and repair. During DNA replication, cleaves the 5'-overhanging flap structure that is generated by displacement synthesis when DNA polymerase encounters the 5'-end of a downstream Okazaki fragment. It enters the flap from the 5'-end and then tracks to cleave the flap base, leaving a nick for ligation. Also involved in the long patch base excision repair (LP-BER) pathway, by cleaving within the apurinic/apyrimidinic (AP) site-terminated flap. Acts as a genome stabilization factor that prevents flaps from equilibrating into structures that lead to duplications and deletions. Also possesses 5'-3' exonuclease activity on nicked or gapped double-stranded DNA, and exhibits RNase H activity. Also involved in replication and repair of rDNA and in repairing mitochondrial DNA. The chain is Flap endonuclease 1 from Schizosaccharomyces japonicus (strain yFS275 / FY16936) (Fission yeast).